Here is a 900-residue protein sequence, read N- to C-terminus: Peroxisomal hydratase-dehydrogenase-epimerase (900 aa).

2 short-chain dehydrogenase like regions span residues 6–230 and 319–535; these read SFKD…THES and SLCN…ASEE. Positions 14, 53, 100, 133, 165, and 169 each coordinate NADP(+). Y165 serves as the catalytic Proton donor. K169 acts as the Lowers pKa of active site Tyr in catalysis. Residues H689, G690, K719, D803, N805, G826, F851, and T852 each coordinate (3R)-3-hydroxydecanoyl-CoA. The MaoC-like domain occupies 775–887; the sequence is EVPHGKVPDF…DTTRNVIVLD (113 aa). The Microbody targeting signal signature appears at 898-900; the sequence is SKL.

This sequence belongs to the short-chain dehydrogenases/reductases (SDR) family. Monomer.

The protein localises to the peroxisome. The enzyme catalyses a (3R)-3-hydroxyacyl-CoA = a (2E)-enoyl-CoA + H2O. It catalyses the reaction a (3R)-3-hydroxyacyl-CoA + NAD(+) = a 3-oxoacyl-CoA + NADH + H(+). The protein operates within lipid metabolism; fatty acid beta-oxidation. In terms of biological role, second trifunctional enzyme acting on the beta-oxidation pathway for fatty acids, possessing hydratase-dehydrogenase-epimerase activities. Converts trans-2-enoyl-CoA via D-3-hydroxyacyl-CoA to 3-ketoacyl-CoA. The sequence is that of Peroxisomal hydratase-dehydrogenase-epimerase (FOX2) from Saccharomyces cerevisiae (strain ATCC 204508 / S288c) (Baker's yeast).